Reading from the N-terminus, the 301-residue chain is B3 domain-containing protein At5g18090 (301 aa).

A DNA-binding region (TF-B3 1) is located at residues 18–113 (FFKILRSADL…CFTVDIYQID (96 aa)). 2 disordered regions span residues 123–142 (SATI…NNIY) and 153–194 (SWSE…KMKV). Positions 133–142 (NKREQRNNIY) are enriched in basic and acidic residues. The TF-B3 2 DNA-binding region spans 209–301 (VPEFTLTIKK…PTEMLVRVSK (93 aa)).

It is found in the nucleus. In Arabidopsis thaliana (Mouse-ear cress), this protein is B3 domain-containing protein At5g18090.